We begin with the raw amino-acid sequence, 414 residues long: Esterase FrsA (414 aa).

The protein belongs to the FrsA family.

It catalyses the reaction a carboxylic ester + H2O = an alcohol + a carboxylate + H(+). In terms of biological role, catalyzes the hydrolysis of esters. This is Esterase FrsA from Salmonella typhi.